The chain runs to 592 residues: Hepatocyte nuclear factor 1-alpha-B (592 aa).

Residues 1 to 31 (MASQLSYLQQELLRALLESGVTKEALKKALA) are dimerization. Residues 1 to 32 (MASQLSYLQQELLRALLESGVTKEALKKALAD) enclose the HNF-p1 domain. The tract at residues 54–78 (NCVQLPNGLGEPQMSEDESSDDGGD) is disordered. The segment covering 67-77 (MSEDESSDDGG) has biased composition (acidic residues). A POU-specific atypical domain is found at 85-180 (KELERLSPEE…IARQFTHAGH (96 aa)). 6 interaction with DNA regions span residues 128–130 (QRE), 141–147 (HLSQHLN), 153–156 (KTQK), 201–204 (RFKW), 261–263 (RVY), and 268–271 (NSGK). A Nuclear localization signal motif is present at residues 195 to 203 (KKMRRNRFK). Positions 197–277 (MRRNRFKWGP…NSGKEEAFRH (81 aa)) form a DNA-binding region, homeobox; HNF1-type. 2 stretches are compositionally biased toward polar residues: residues 284–295 (YNGQQSSAQPLS) and 306–328 (RYTQ…TLSP). Disordered stretches follow at residues 284-329 (YNGQ…LSPS) and 511-533 (KQVV…HNQD).

It belongs to the HNF1 homeobox family. Binds DNA as dimer. Forms a homodimer or heterodimer with HNF1-alpha-A. Potentially also form a heterodimer with HNF1-beta. In terms of tissue distribution, liver.

Its subcellular location is the nucleus. In terms of biological role, transcriptional activator that regulates the tissue specific expression of multiple genes, especially in pancreas and liver. Binds to the hepatocyte specific promoter element HP1. Binds to the inverted palindrome 5'-GTTAATNATTAAC-3'. This is Hepatocyte nuclear factor 1-alpha-B (hnf1a-b) from Xenopus laevis (African clawed frog).